The following is a 158-amino-acid chain: Regulator of sigma D (158 aa).

The protein belongs to the Rsd/AlgQ family. Interacts with RpoD.

Its subcellular location is the cytoplasm. Its function is as follows. Binds RpoD and negatively regulates RpoD-mediated transcription activation by preventing the interaction between the primary sigma factor RpoD with the catalytic core of the RNA polymerase and with promoter DNA. May be involved in replacement of the RNA polymerase sigma subunit from RpoD to RpoS during the transition from exponential growth to the stationary phase. The chain is Regulator of sigma D from Escherichia fergusonii (strain ATCC 35469 / DSM 13698 / CCUG 18766 / IAM 14443 / JCM 21226 / LMG 7866 / NBRC 102419 / NCTC 12128 / CDC 0568-73).